We begin with the raw amino-acid sequence, 740 residues long: Transcription activator of gluconeogenesis NCU03938 (740 aa).

A disordered region spans residues 1–66 (MPDDVGPAEA…KYDPKDPLRP (66 aa)). Residues 19–37 (SDNEYDETEVTTKDDDDEK) show a composition bias toward acidic residues. A compositionally biased stretch (basic and acidic residues) spans 52 to 65 (GDQKKKYDPKDPLR). Residues 75-103 (CYACQRAHLTCGDERPCQRCIKRGLAEAC) constitute a DNA-binding region (zn(2)-C6 fungal-type). Disordered regions lie at residues 333-405 (PAGP…RQRD), 532-579 (NSDT…KEQP), and 639-674 (APTA…PTGV). The segment covering 337 to 351 (TSLQSPSTENNSPQP) has biased composition (polar residues). The region spanning 475 to 546 (ALFEHEEFMH…SISSKGGRGG (72 aa)) is the PAS domain. Low complexity predominate over residues 639–658 (APTASGGSGSSNGTVVNGGP).

It belongs to the ERT1/acuK family.

It is found in the nucleus. In terms of biological role, transcription factor which regulates nonfermentable carbon utilization. Activator of gluconeogenetic genes. This chain is Transcription activator of gluconeogenesis NCU03938, found in Neurospora crassa (strain ATCC 24698 / 74-OR23-1A / CBS 708.71 / DSM 1257 / FGSC 987).